Here is a 200-residue protein sequence, read N- to C-terminus: UPF0301 protein BR0480/BS1330_I0481 (200 aa).

This sequence belongs to the UPF0301 (AlgH) family.

The polypeptide is UPF0301 protein BR0480/BS1330_I0481 (Brucella suis biovar 1 (strain 1330)).